Here is a 525-residue protein sequence, read N- to C-terminus: MSDLLNRRLSLLGANLPLLKQCLHGIERECLRVTDEGRLAQTPHPESLGSALTNEQITTDYSESLLEFITPALPDPAQVLESLEQTHRFVYSKLGDELLWSPSMPCTLPAEEDIPIAEYGASNIGKLKHVYRKGLALRYGRTMQCIAGIHYNFSLPEALWPLLRASDGNEQSDRDYQSAAYIALIRNFRRYSWLLMYLFGASPALDKGFLRGRPHQLEELDAETLYLPYATSLRMSDLGYQSNAQAGLTPCYNNLASYTDSLRKAVGTPYPPYVEIGTHVDGEWVQLNTNILQIENEYYSNIRPKRVTYTGERPIQALTSRGVQYVEVRCLDINPFLPVGIDLTEARFLDAFLLFCALEDSPLLDNGECGQCTDNFLTVVKEGRRPGLELRRDGHPIELKAWASDLLGRIGQLAELLDRAQGGDEHAKALAAQQAKVDDASLTPSAQVLARMGEHEESFIQFSLRQSRLHAETFREQPLPTERQQAYETLARNSLAEQSRLEQEEVGDFDLFVGAYQASILAISN.

The protein belongs to the glutamate--cysteine ligase type 1 family. Type 1 subfamily.

It catalyses the reaction L-cysteine + L-glutamate + ATP = gamma-L-glutamyl-L-cysteine + ADP + phosphate + H(+). It participates in sulfur metabolism; glutathione biosynthesis; glutathione from L-cysteine and L-glutamate: step 1/2. This is Glutamate--cysteine ligase from Pseudomonas putida (strain W619).